Consider the following 209-residue polypeptide: Imidazole glycerol phosphate synthase subunit HisH (209 aa).

Residues 1–205 form the Glutamine amidotransferase type-1 domain; the sequence is MIAIIDYGMG…KGVVETWKSS (205 aa). Cysteine 79 serves as the catalytic Nucleophile. Catalysis depends on residues histidine 180 and glutamate 182.

In terms of assembly, heterodimer of HisH and HisF.

Its subcellular location is the cytoplasm. The catalysed reaction is 5-[(5-phospho-1-deoxy-D-ribulos-1-ylimino)methylamino]-1-(5-phospho-beta-D-ribosyl)imidazole-4-carboxamide + L-glutamine = D-erythro-1-(imidazol-4-yl)glycerol 3-phosphate + 5-amino-1-(5-phospho-beta-D-ribosyl)imidazole-4-carboxamide + L-glutamate + H(+). It carries out the reaction L-glutamine + H2O = L-glutamate + NH4(+). It functions in the pathway amino-acid biosynthesis; L-histidine biosynthesis; L-histidine from 5-phospho-alpha-D-ribose 1-diphosphate: step 5/9. IGPS catalyzes the conversion of PRFAR and glutamine to IGP, AICAR and glutamate. The HisH subunit catalyzes the hydrolysis of glutamine to glutamate and ammonia as part of the synthesis of IGP and AICAR. The resulting ammonia molecule is channeled to the active site of HisF. In Bacillus thuringiensis (strain Al Hakam), this protein is Imidazole glycerol phosphate synthase subunit HisH.